The primary structure comprises 117 residues: UPF0342 protein lwe2240 (117 aa).

It belongs to the UPF0342 family.

The sequence is that of UPF0342 protein lwe2240 from Listeria welshimeri serovar 6b (strain ATCC 35897 / DSM 20650 / CCUG 15529 / CIP 8149 / NCTC 11857 / SLCC 5334 / V8).